The chain runs to 239 residues: Protein GrpE (239 aa).

Disordered regions lie at residues Met1–Glu50 and Met209–Val239. Positions Val16–Ala30 are enriched in polar residues. Acidic residues predominate over residues Glu218 to Val239.

The protein belongs to the GrpE family. Homodimer.

Its subcellular location is the cytoplasm. Its function is as follows. Participates actively in the response to hyperosmotic and heat shock by preventing the aggregation of stress-denatured proteins, in association with DnaK and GrpE. It is the nucleotide exchange factor for DnaK and may function as a thermosensor. Unfolded proteins bind initially to DnaJ; upon interaction with the DnaJ-bound protein, DnaK hydrolyzes its bound ATP, resulting in the formation of a stable complex. GrpE releases ADP from DnaK; ATP binding to DnaK triggers the release of the substrate protein, thus completing the reaction cycle. Several rounds of ATP-dependent interactions between DnaJ, DnaK and GrpE are required for fully efficient folding. The protein is Protein GrpE of Prochlorococcus marinus (strain MIT 9312).